We begin with the raw amino-acid sequence, 196 residues long: MMDNMQTEAQPTRTRILNAAREIFSENGFHSASMKAICKSCAISPGTLYHHFISKEALIQAIILQDQERALARFREPIEGIHFVDYMVESIVSLTHEAFGQRALVVEIMAEGMRNPQVAAMLKNKHMTITEFVAQRMRDAQQKGEISPDINTAMTSRLLLDLTYGVLADIEAEDLAREASFAQGLRAMIGGILTAS.

The region spanning 10–70 (QPTRTRILNA…AIILQDQERA (61 aa)) is the HTH tetR-type domain. Positions 33-52 (SMKAICKSCAISPGTLYHHF) form a DNA-binding region, H-T-H motif.

Repressor for the uidRABC (gusRABC) operon. The polypeptide is HTH-type transcriptional regulator UidR (uidR) (Escherichia coli O157:H7).